Here is a 485-residue protein sequence, read N- to C-terminus: Bifunctional protein HldE (485 aa).

Residues 1–326 form a ribokinase region; it reads MDFSSTRVLC…AELDESAISN (326 aa). 195-198 is an ATP binding site; sequence NVKE. Asp-271 is an active-site residue. The segment at 354-485 is cytidylyltransferase; sequence FTNGCFDILH…GIVKKISTLT (132 aa).

The protein in the N-terminal section; belongs to the carbohydrate kinase PfkB family. This sequence in the C-terminal section; belongs to the cytidylyltransferase family. In terms of assembly, homodimer.

It carries out the reaction D-glycero-beta-D-manno-heptose 7-phosphate + ATP = D-glycero-beta-D-manno-heptose 1,7-bisphosphate + ADP + H(+). The enzyme catalyses D-glycero-beta-D-manno-heptose 1-phosphate + ATP + H(+) = ADP-D-glycero-beta-D-manno-heptose + diphosphate. The protein operates within nucleotide-sugar biosynthesis; ADP-L-glycero-beta-D-manno-heptose biosynthesis; ADP-L-glycero-beta-D-manno-heptose from D-glycero-beta-D-manno-heptose 7-phosphate: step 1/4. Its pathway is nucleotide-sugar biosynthesis; ADP-L-glycero-beta-D-manno-heptose biosynthesis; ADP-L-glycero-beta-D-manno-heptose from D-glycero-beta-D-manno-heptose 7-phosphate: step 3/4. In terms of biological role, catalyzes the phosphorylation of D-glycero-D-manno-heptose 7-phosphate at the C-1 position to selectively form D-glycero-beta-D-manno-heptose-1,7-bisphosphate. Catalyzes the ADP transfer from ATP to D-glycero-beta-D-manno-heptose 1-phosphate, yielding ADP-D-glycero-beta-D-manno-heptose. This chain is Bifunctional protein HldE, found in Granulibacter bethesdensis (strain ATCC BAA-1260 / CGDNIH1).